Consider the following 373-residue polypeptide: Muscleblind-like protein 2 (373 aa).

4 C3H1-type zinc fingers span residues Trp-13–Lys-41, Asn-47–Thr-73, Thr-176–Asp-204, and Asp-212–Ala-238.

This sequence belongs to the muscleblind family. As to quaternary structure, interacts with ITGA3.

It localises to the nucleus. It is found in the cytoplasm. In terms of biological role, mediates pre-mRNA alternative splicing regulation. Acts either as activator or repressor of splicing on specific pre-mRNA targets. Inhibits cardiac troponin-T (TNNT2) pre-mRNA exon inclusion but induces insulin receptor (IR) pre-mRNA exon inclusion in muscle. Antagonizes the alternative splicing activity pattern of CELF proteins. RNA-binding protein that binds to 5'ACACCC-3' core sequence, termed zipcode, within the 3'UTR of ITGA3. Binds to CUG triplet repeat expansion in myotonic dystrophy muscle cells by sequestering the target RNAs. Together with RNA binding proteins RBPMS and RBFOX2, activates vascular smooth muscle cells alternative splicing events. Regulates NCOR2 alternative splicing. Seems to regulate expression and localization of ITGA3 by transporting it from the nucleus to cytoplasm at adhesion plaques. May play a role in myotonic dystrophy pathophysiology (DM). The sequence is that of Muscleblind-like protein 2 (Mbnl2) from Mus musculus (Mouse).